The primary structure comprises 503 residues: ATP synthase subunit alpha (503 aa).

Residue 170 to 177 (GDRQTGKT) coordinates ATP.

Belongs to the ATPase alpha/beta chains family. As to quaternary structure, F-type ATPases have 2 components, CF(1) - the catalytic core - and CF(0) - the membrane proton channel. CF(1) has five subunits: alpha(3), beta(3), gamma(1), delta(1), epsilon(1). CF(0) has three main subunits: a(1), b(2) and c(9-12). The alpha and beta chains form an alternating ring which encloses part of the gamma chain. CF(1) is attached to CF(0) by a central stalk formed by the gamma and epsilon chains, while a peripheral stalk is formed by the delta and b chains.

The protein localises to the cell inner membrane. The enzyme catalyses ATP + H2O + 4 H(+)(in) = ADP + phosphate + 5 H(+)(out). Functionally, produces ATP from ADP in the presence of a proton gradient across the membrane. The alpha chain is a regulatory subunit. This is ATP synthase subunit alpha from Pseudothermotoga lettingae (strain ATCC BAA-301 / DSM 14385 / NBRC 107922 / TMO) (Thermotoga lettingae).